A 1123-amino-acid polypeptide reads, in one-letter code: Telomerase reverse transcriptase (1123 aa).

Residues 1–230 (MPRAPRCRAV…ARRRRGSPGS (230 aa)) are RNA-interacting domain 1. Positions 58 to 197 (VPWGARPPPA…APGLPGLPGL (140 aa)) are GQ motif. Residues 137-141 (WGLLL) form a required for regulating specificity for telomeric DNA and for processivity for primer elongation region. The disordered stretch occupies residues 202 to 311 (AGAGASADLR…GVPHDPAHPE (110 aa)). The short motif at 222 to 240 (RRRRGSPGSGVPLAKRPRR) is the Bipartite nuclear localization signal element. The residue at position 227 (S227) is a Phosphoserine; by PKB/AKT1. Positions 231-308 (GVPLAKRPRR…GPQGVPHDPA (78 aa)) are linker. The span at 260-279 (PPVSEAPAVTPAVAASPAAS) shows a compositional bias: low complexity. The tract at residues 309-539 (HPETKRFLYC…LARFLVLVDG (231 aa)) is RNA-interacting domain 2. The short motif at 312-317 (TKRFLY) is the TFLY; involved in RNA binding element. Residues 360 to 510 (ARRMRRLPAR…MKVRDCTWLH (151 aa)) form a QFP motif region. The tract at residues 381–401 (LGNHARCPYRALLRTHCPLRA) is CP motif. At S446 the chain carries Phosphoserine; by DYRK2. Positions 595–926 (EVRRHREARP…CLFPWCGLLL (332 aa)) constitute a Reverse transcriptase domain. Y697 is subject to Phosphotyrosine; by SRC-type Tyr-kinases. Positions 702, 859, and 860 each coordinate Mg(2+). The segment at 905–919 (LGSAAPLQLPAHCLF) is required for oligomerization. The interval 921–925 (WCGLL) is primer grip sequence. Positions 927 to 1123 (DTRTLEVSCD…LTADFKTILD (197 aa)) are CTE.

This sequence belongs to the reverse transcriptase family. Telomerase subfamily. Catalytic component of the telomerase holoenzyme complex composed of one molecule of TERT, one molecule of WRAP53/TCAB1, two molecules of H/ACA ribonucleoprotein complex subunits DKC1, NOP10, NHP2 and GAR1, and a telomerase RNA template component (TERC). The telomerase holoenzyme complex is associated with TEP1, SMG6/EST1A and POT1. The molecular chaperone HSP90/P23 complex is required for correct assembly and stabilization of the active telomerase. Interacts directly with HSP90A and PTGES3. Interacts with HSPA1A; the interaction occurs in the absence of TERC and dissociates once the complex has formed. Interacts with RAN; the interaction promotes nuclear export of TERT. Interacts with XPO1. Interacts with PTPN11; the interaction retains TERT in the nucleus. Interacts with NCL (via RRM1 and C-terminal RRM4/Arg/Gly-rich domains); the interaction is important for nucleolar localization of TERT. Interacts with SMARCA4 (via the bromodomain); the interaction regulates Wnt-mediated signaling. Interacts with MCRS1 (isoform MCRS2); the interaction inhibits in vitro telomerase activity. Interacts with PIF1; the interaction has no effect on the elongation activity of TERT. Interacts with PML; the interaction recruits TERT to PML bodies and inhibits telomerase activity. Interacts with GNL3L. Interacts with isoform 1 and isoform 2 of NVL. Interacts with DHX36. Interacts with ATF7. Post-translationally, phosphorylation at Tyr-697 under oxidative stress leads to translocation of TERT to the cytoplasm and reduces its antiapoptotic activity. Dephosphorylated by SHP2/PTPN11 leading to nuclear retention. Phosphorylation at Ser-227 by the AKT pathway promotes nuclear location. Phosphorylation at the G2/M phase at Ser-446 by DYRK2 promotes ubiquitination by the EDVP complex and degradation. Ubiquitinated by the EDVP complex, a E3 ligase complex following phosphorylation at Ser-446 by DYRK2. Ubiquitinated leads to proteasomal degradation.

The protein resides in the nucleus. Its subcellular location is the nucleolus. The protein localises to the nucleoplasm. It is found in the chromosome. It localises to the telomere. The protein resides in the cytoplasm. Its subcellular location is the PML body. The catalysed reaction is DNA(n) + a 2'-deoxyribonucleoside 5'-triphosphate = DNA(n+1) + diphosphate. Functionally, telomerase is a ribonucleoprotein enzyme essential for the replication of chromosome termini in most eukaryotes. Active in progenitor and cancer cells. Inactive, or very low activity, in normal somatic cells. Catalytic component of the teleromerase holoenzyme complex whose main activity is the elongation of telomeres by acting as a reverse transcriptase that adds simple sequence repeats to chromosome ends by copying a template sequence within the RNA component of the enzyme. Catalyzes the RNA-dependent extension of 3'-chromosomal termini with the 6-nucleotide telomeric repeat unit, 5'-TTAGGG-3'. The catalytic cycle involves primer binding, primer extension and release of product once the template boundary has been reached or nascent product translocation followed by further extension. More active on substrates containing 2 or 3 telomeric repeats. Telomerase activity is regulated by a number of factors including telomerase complex-associated proteins, chaperones and polypeptide modifiers. Modulates Wnt signaling. Plays important roles in aging and antiapoptosis. The protein is Telomerase reverse transcriptase (TERT) of Canis lupus familiaris (Dog).